Consider the following 141-residue polypeptide: Translation initiation factor IF-1, chloroplastic (141 aa).

Residues M1–C46 constitute a chloroplast transit peptide. The interval A49–G69 is disordered. The S1-like domain maps to K63 to S138.

Belongs to the IF-1 family. In terms of assembly, component of the 30S ribosomal translation pre-initiation complex which assembles on the 30S ribosome in the order IF-2 and IF-3, IF-1 and N-formylmethionyl-tRNA(fMet); mRNA recruitment can occur at any time during PIC assembly.

The protein resides in the plastid. The protein localises to the chloroplast. One of the essential components for the initiation of protein synthesis. Stabilizes the binding of IF-2 and IF-3 on the 30S subunit to which N-formylmethionyl-tRNA(fMet) subsequently binds. Helps modulate mRNA selection, yielding the 30S pre-initiation complex (PIC). Upon addition of the 50S ribosomal subunit IF-1, IF-2 and IF-3 are released leaving the mature 70S translation initiation complex. This Arabidopsis thaliana (Mouse-ear cress) protein is Translation initiation factor IF-1, chloroplastic.